The chain runs to 405 residues: MPLLLYTCLLWLPTSGLWTVQAMDPNAAYVNMSNHHRGLASANVDFAFSLYKHLVALSPKKNIFISPVSISMALAMLSLGTCGHTRAQLLQGLGFNLTERSETEIHQGFQHLHQLFAKSDTSLEMTMGNALFLDGSLELLESFSADIKHYYESEVLAMNFQDWATASRQINSYVKNKTQGKIVDLFSGLDSPAILVLVNYIFFKGTWTQPFDLASTREENFYVDETTVVKVPMMLQSSTISYLHDSELPCQLVQMNYVGNGTVFFILPDKGKMNTVIAALSRDTINRWSAGLTSSQVDLYIPKVTISGVYDLGDVLEEMGIADLFTNQANFSRITQDAQLKSSKVVHKAVLQLNEEGVDTAGSTGVTLNLTSKPIILRFNQPFIIMIFDHFTWSSLFLARVMNPV.

A signal peptide spans 1-22 (MPLLLYTCLLWLPTSGLWTVQA). N-linked (GlcNAc...) asparagine glycosylation is found at Asn31, Asn96, and Asn176. Gln254 contributes to the cortisol binding site. An N-linked (GlcNAc...) asparagine glycan is attached at Asn260. Residue Asn286 participates in cortisol binding. N-linked (GlcNAc...) asparagine glycosylation is found at Asn330 and Asn369. Cortisol contacts are provided by His390 and Trp393.

The protein belongs to the serpin family. N-glycosylated; binds 5 oligosaccharide chains. In terms of processing, glycosylation in position Asn-260 is needed for steroid binding. In terms of tissue distribution, plasma; synthesized in liver. Has also been identified in a number of glycocorticoid responsive cells.

The protein resides in the secreted. Functionally, major transport protein for glucocorticoids and progestins in the blood of almost all vertebrate species. This is Corticosteroid-binding globulin (SERPINA6) from Homo sapiens (Human).